The following is a 145-amino-acid chain: D-aminoacyl-tRNA deacylase (145 aa).

The short motif at Gly137–Pro138 is the Gly-cisPro motif, important for rejection of L-amino acids element.

It belongs to the DTD family. Homodimer.

The protein resides in the cytoplasm. It carries out the reaction glycyl-tRNA(Ala) + H2O = tRNA(Ala) + glycine + H(+). The catalysed reaction is a D-aminoacyl-tRNA + H2O = a tRNA + a D-alpha-amino acid + H(+). Functionally, an aminoacyl-tRNA editing enzyme that deacylates mischarged D-aminoacyl-tRNAs. Also deacylates mischarged glycyl-tRNA(Ala), protecting cells against glycine mischarging by AlaRS. Acts via tRNA-based rather than protein-based catalysis; rejects L-amino acids rather than detecting D-amino acids in the active site. By recycling D-aminoacyl-tRNA to D-amino acids and free tRNA molecules, this enzyme counteracts the toxicity associated with the formation of D-aminoacyl-tRNA entities in vivo and helps enforce protein L-homochirality. This Pseudomonas paraeruginosa (strain DSM 24068 / PA7) (Pseudomonas aeruginosa (strain PA7)) protein is D-aminoacyl-tRNA deacylase.